Here is a 429-residue protein sequence, read N- to C-terminus: Acetyltransferase pyr8 (429 aa).

A run of 9 helical transmembrane segments spans residues 12–32 (IAQE…VIIT), 39–56 (LRLA…RFSL), 69–89 (GVAA…LLIT), 154–174 (YVLR…LIHM), 221–241 (VCLN…RISA), 300–320 (IFFT…ILGI), 324–344 (GSGA…EDGV), 365–385 (LVGF…YLYP), and 409–429 (VAQK…GGEI).

This sequence belongs to the wax synthase family.

It is found in the membrane. It participates in secondary metabolite biosynthesis; terpenoid biosynthesis. Functionally, acetyltransferase; part of the gene cluster that mediates the biosynthesis of pyripyropene A, a specific human acyl-coenzyme A:cholesterol acyltransferase 2 inhibitor. The first step of the pathway is the synthesis of nicotinyl-CoA from nicotinic acid by the nicotinic acid-CoA ligase pyr1. Nicotinyl-CoA is then a substrate of polyketide synthase pyr2 to produce 4-hydroxy-6-(3-pyridinyl)-2H-pyran-2-one (HPPO) which is further prenylated by the polyprenyl transferase pyr6 to yield farnesyl-HPPO. The next steps consist of an epoxidation of farnesyl-HPPO to epoxyfarnesyl-HPPO by FAD-dependent monooxygenase pyr5 and a cyclization of the terpenoid portion by the terpene cyclase pyr4 to yield deacetyl-pyripyropene E. The 2 cytochrome P450 monooxygenases pyr3 and pyr9, and the 2 acetyltransferases pyr7 and pyr8 are involved in the conversion of deacetyl-pyripyropene E into pyripyropene A through several cycles of oxidation and acetylation steps. Pyr7 acetylates deacetyl-pyripyropene E to pyripyropene E which is oxidized to 11-deacetyl-pyripyropene O by pyr3, which is in turn acetylated into pyripyropene O by pyr8. Pyripyropene O is then oxidized to deacetyl-pyripyropene A by pyr9. Deacetyl-pyripyropene A is finally acetylated to pyripyropene A by pyr8. The sequence is that of Acetyltransferase pyr8 from Aspergillus fumigatus (strain ATCC MYA-4609 / CBS 101355 / FGSC A1100 / Af293) (Neosartorya fumigata).